Consider the following 329-residue polypeptide: Cysteine synthase (329 aa).

The residue at position 48 (Lys48) is an N6-(pyridoxal phosphate)lysine. Pyridoxal 5'-phosphate is bound by residues Asn78, 183–187 (GTGGT), and Ser278.

The protein belongs to the cysteine synthase/cystathionine beta-synthase family. Homodimer. Pyridoxal 5'-phosphate serves as cofactor.

It carries out the reaction O-acetyl-L-serine + hydrogen sulfide = L-cysteine + acetate. The protein operates within amino-acid biosynthesis; L-cysteine biosynthesis; L-cysteine from L-serine: step 2/2. In terms of biological role, catalyzes the conversion of O-acetylserine (OAS) to cysteine through the elimination of acetate and addition of hydrogen sulfide. This Synechococcus elongatus (strain ATCC 33912 / PCC 7942 / FACHB-805) (Anacystis nidulans R2) protein is Cysteine synthase (srpG).